The sequence spans 155 residues: DNA polymerase epsilon subunit 4 (155 aa).

Composition is skewed to acidic residues over residues 1–16 (MASE…EEQD) and 24–48 (ETEE…DNPE). The disordered stretch occupies residues 1–76 (MASEELFEAE…APADNEAKMT (76 aa)). The segment covering 49-65 (AESTTEQLTEKPVTNGN) has biased composition (polar residues).

Component of the DNA polymerase epsilon complex consisting of four subunits: the catalytic subunit PolE1/DNApol-epsilon255 and the accessory subunits PolE2/DNApol-epsilon58, Chrac-14/DNApolE3 and PolE4/Mes4.

The protein localises to the nucleus. In terms of biological role, accessory component of the DNA polymerase epsilon complex. Participates in DNA repair and in chromosomal DNA replication. Has a role in cell cycle progression. Required for wing morphogenesis. The protein is DNA polymerase epsilon subunit 4 of Drosophila melanogaster (Fruit fly).